Consider the following 614-residue polypeptide: Allergen Ara h 1, clone P17 (614 aa).

An N-terminal signal peptide occupies residues 1–25; it reads MRGRVSPLMLLLGILVLASVSATQA. Disordered regions lie at residues 72 to 177, 334 to 356, 372 to 397, and 464 to 491; these read DTGA…RRFS, NAGG…DNEG, HAKS…DGEP, and KEQQ…SNRE. The segment covering 81–132 has biased composition (basic and acidic residues); sequence PPGERTRGRQPGDYDDDRRQPRREEGGRWGPAEPREREREEDWRQPREDWRR. Positions 169-327 constitute a Cupin type-1 1 domain; it reads FYFPSRRFST…AFNAEFNEIR (159 aa). Residues 390–566 enclose the Cupin type-1 2 domain; the sequence is INLRDGEPDL…AFPGSGEQVE (177 aa). Positions 464-474 are enriched in basic and acidic residues; sequence KEQQQRGRREQ. The segment covering 475–486 has biased composition (acidic residues); it reads EWEEEEEDEEEE. N-linked (GlcNAc...) asparagine glycosylation occurs at asparagine 516. Residues 572–614 are disordered; the sequence is QRESHFVSARPQSQSPSSPEKEDQEEENQGGKGPLLSILKAFN.

Belongs to the 7S seed storage protein family.

This Arachis hypogaea (Peanut) protein is Allergen Ara h 1, clone P17.